The following is a 330-amino-acid chain: Phenylalanine--tRNA ligase alpha subunit (330 aa).

Residue glutamate 257 participates in Mg(2+) binding.

It belongs to the class-II aminoacyl-tRNA synthetase family. Phe-tRNA synthetase alpha subunit type 1 subfamily. As to quaternary structure, tetramer of two alpha and two beta subunits. It depends on Mg(2+) as a cofactor.

The protein resides in the cytoplasm. It catalyses the reaction tRNA(Phe) + L-phenylalanine + ATP = L-phenylalanyl-tRNA(Phe) + AMP + diphosphate + H(+). This chain is Phenylalanine--tRNA ligase alpha subunit, found in Acaryochloris marina (strain MBIC 11017).